A 1828-amino-acid chain; its full sequence is InaD-like protein (1828 aa).

The 61-residue stretch at 5-65 folds into the L27 domain; sequence PAPDKLQVLQ…SIKQLKGQLS (61 aa). 3 PDZ domains span residues 134–221, 248–328, and 365–453; these read YIDI…AREP, DVEL…ARDP, and GVEL…VRRK. A phosphoserine mark is found at Ser-459 and Ser-522. Residues 553–639 enclose the PDZ 4 domain; sequence DAELQKYSKL…PFTLVCCRRL (87 aa). Residue Ser-645 is modified to Phosphoserine. PDZ domains follow at residues 686–758 and 1070–1162; these read IVEL…EVLK and IVEI…QSLS. Residues 1168–1220 are disordered; it reads IPSVHNKANKIANNQDQNTEEKKEKRQGTPPPPMKLPPPYKAPSDDSDENEEE. A compositionally biased stretch (pro residues) spans 1196–1208; sequence TPPPPMKLPPPYK. Ser-1211 carries the phosphoserine modification. Residues 1241-1324 form the PDZ 7 domain; the sequence is IIELEKDKNG…KVKLVFIRNE (84 aa). Residues 1333-1362 are disordered; that stretch reads APFPVPSSSPSSLEDQSGTEPVSSEEDGSL. Residues 1345 to 1354 show a composition bias toward polar residues; it reads LEDQSGTEPV. 2 PDZ domains span residues 1464–1547 and 1560–1642; these read IIEI…YRDE and PVDL…GRLR. The residue at position 1535 (Thr-1535) is a Phosphothreonine. The segment covering 1645-1668 has biased composition (polar residues); the sequence is SWTSSRKTSQNSQGSQHSTHSSFH. Positions 1645–1669 are disordered; it reads SWTSSRKTSQNSQGSQHSTHSSFHP. Residues 1703 to 1789 enclose the PDZ 10 domain; the sequence is TVEIIRELSD…RIILQVVADT (87 aa). The interval 1805–1828 is disordered; sequence YHLGSPTAEHHPEDTEEPLQMTAG.

In terms of assembly, forms a ternary complex with PALS1 and CRB1. Component of a complex whose core is composed of ARHGAP17, AMOT, PALS1, INADL/PATJ and PARD3/PAR3. Forms a heterotrimeric complex composed of MMP5, LIN7B and PATJ; the N-terminal L27 domain of PALS1 interacts with the L27 domain of PATJ and the C-terminal L27 domain of PALS1 interacts with the L27 domain of LIN7B. Component of a complex composed of CRB3, PALS1 and PATJ. As part of the Crumbs complex; interacts with WWP1, the interaction is enhanced by AMOTL2 and facilitates WWP1 localization to the plasma membrane. The Crumbs complex promotes monoubiquitination of AMOTL2 by WWP1, which activates the Hippo signaling pathway. Interacts (via N-terminus) with PALS1/PALS (via PDZ domain). Interacts with TJP3/ZO-3 and CLDN1/claudin-1. Interacts with ASIC3, KCNJ10, KCNJ15, GRIN2A, GRIN2B, GRIN2C, GRIN2D, NLGN2, and HTR2A. Interacts with MPP7. Directly interacts with HTR4. Interacts (via PDZ domain 8) with WWC1 (via the ADDV motif). Interacts with SLC6A4. Interacts (via C-terminus) with ARHGEF18. Interacts with NPHP1. Interacts with PARD3/PAR3. Interacts (via PDZ1-6 domains) with TJP1/ZO1; the interaction is required for attachment and extension of TJP1/ZO1 condensates along the apical cell interface.

Its subcellular location is the cell junction. It is found in the tight junction. The protein resides in the apical cell membrane. The protein localises to the cytoplasm. It localises to the perinuclear region. Its function is as follows. Scaffolding protein that facilitates the localization of proteins to the cell membrane. Required for the correct formation of tight junctions and epithelial apico-basal polarity. Acts (via its L27 domain) as an apical connector and elongation factor for multistranded TJP1/ZO1 condensates that form a tight junction belt, thereby required for the formation of the tight junction-mediated cell barrier. Positively regulates epithelial cell microtubule elongation and cell migration, possibly via facilitating localization of PRKCI/aPKC and PAR3D/PAR3 at the leading edge of migrating cells. Plays a role in the correct reorientation of the microtubule-organizing center during epithelial migration. May regulate the surface expression and/or function of ASIC3 in sensory neurons. May recruit ARHGEF18 to apical cell-cell boundaries. The polypeptide is InaD-like protein (Canis lupus familiaris (Dog)).